A 509-amino-acid chain; its full sequence is Tyrosine-protein kinase STK (509 aa).

Residues 1–16 show a composition bias toward polar residues; sequence MGPCCSKQTKALNNQP. Residues 1–23 form a disordered region; it reads MGPCCSKQTKALNNQPDKSKSKD. Gly-2 is lipidated: N-myristoyl glycine. In terms of domain architecture, SH3 spans 59 to 120; sequence PGVTIFVALY…PSTYVAPEKS (62 aa). An SH2 domain is found at 126-218; it reads WYFGDVKRAE…GLVCALTLPC (93 aa). Positions 240–495 constitute a Protein kinase domain; sequence LRLNRKLGAG…LQGVLEDYFV (256 aa). ATP is bound by residues 246-254 and Lys-268; that span reads LGAGQFGEV. The active-site Proton acceptor is the Asp-360. Phosphotyrosine; by autocatalysis is present on Tyr-390.

Belongs to the protein kinase superfamily. Tyr protein kinase family. SRC subfamily.

It catalyses the reaction L-tyrosyl-[protein] + ATP = O-phospho-L-tyrosyl-[protein] + ADP + H(+). The chain is Tyrosine-protein kinase STK (STK) from Hydra vulgaris (Hydra).